We begin with the raw amino-acid sequence, 435 residues long: rRNA methyltransferase 3A, mitochondrial (435 aa).

A mitochondrion-targeting transit peptide spans 1-42 (MAALMYNVSRGLVMLGERSLFQRERYQILVNSRRFLRGLRRR). The span at 314–324 (KQLVSGQTENV) shows a compositional bias: polar residues. The tract at residues 314–351 (KQLVSGQTENVSSDDYSESDSDDDDDEEEDEDSLPHVK) is disordered. The span at 328–345 (DYSESDSDDDDDEEEDED) shows a compositional bias: acidic residues. Glycine 369 and leucine 402 together coordinate S-adenosyl-L-methionine.

It belongs to the class IV-like SAM-binding methyltransferase superfamily. RNA methyltransferase TrmH family.

The protein localises to the mitochondrion. It carries out the reaction a uridine in rRNA + S-adenosyl-L-methionine = a 2'-O-methyluridine in rRNA + S-adenosyl-L-homocysteine + H(+). Functionally, S-adenosyl-L-methionine-dependent 2'-O-ribose methyltransferase that catalyzes the formation of 2'-O-methylguanosine at position 1485 (Gm1485) in the mitochondrial large subunit ribosomal RNA (mtLSU rRNA), a conserved modification in the peptidyl transferase domain of the mtLSU rRNA. Also required for formation of 2'-O-methyluridine at position 1484 (Um1484) mediated by MRM2. The protein is rRNA methyltransferase 3A, mitochondrial (mrm3a) of Danio rerio (Zebrafish).